The sequence spans 468 residues: Abscisic acid 8'-hydroxylase 4 (468 aa).

The helical transmembrane segment at 4-24 (IWFLVVPILILCLLLVRVIVS) threads the bilayer. Position 415 (Cys-415) interacts with heme.

It belongs to the cytochrome P450 family. Heme serves as cofactor. Mainly expressed in flowers. Lower expression in siliques, rosette leaves, roots and stems. Not expressed in dry seeds. Expressed in silique envelopes, but not in embryo or endosperm during the seed development.

It localises to the membrane. It carries out the reaction 2-cis-(+)-abscisate + reduced [NADPH--hemoprotein reductase] + O2 = (+)-8'-hydroxyabscisate + oxidized [NADPH--hemoprotein reductase] + H2O + H(+). Its pathway is plant hormone degradation; abscisic acid degradation. Involved in the oxidative degradation of abscisic acid, but not in the isomerization of the produced 8'-hydroxyabscisic acid (8'-OH-ABA) to (-)-phaseic acid (PA). This is Abscisic acid 8'-hydroxylase 4 (CYP707A4) from Arabidopsis thaliana (Mouse-ear cress).